Here is a 416-residue protein sequence, read N- to C-terminus: Gamma-glutamyl phosphate reductase (416 aa).

It belongs to the gamma-glutamyl phosphate reductase family.

The protein resides in the cytoplasm. The enzyme catalyses L-glutamate 5-semialdehyde + phosphate + NADP(+) = L-glutamyl 5-phosphate + NADPH + H(+). The protein operates within amino-acid biosynthesis; L-proline biosynthesis; L-glutamate 5-semialdehyde from L-glutamate: step 2/2. Its function is as follows. Catalyzes the NADPH-dependent reduction of L-glutamate 5-phosphate into L-glutamate 5-semialdehyde and phosphate. The product spontaneously undergoes cyclization to form 1-pyrroline-5-carboxylate. In Streptococcus pyogenes serotype M1, this protein is Gamma-glutamyl phosphate reductase.